The chain runs to 268 residues: Ribosomal RNA small subunit methyltransferase A (268 aa).

N19, L21, G46, E67, D92, and N113 together coordinate S-adenosyl-L-methionine.

The protein belongs to the class I-like SAM-binding methyltransferase superfamily. rRNA adenine N(6)-methyltransferase family. RsmA subfamily.

The protein resides in the cytoplasm. The enzyme catalyses adenosine(1518)/adenosine(1519) in 16S rRNA + 4 S-adenosyl-L-methionine = N(6)-dimethyladenosine(1518)/N(6)-dimethyladenosine(1519) in 16S rRNA + 4 S-adenosyl-L-homocysteine + 4 H(+). Its function is as follows. Specifically dimethylates two adjacent adenosines (A1518 and A1519) in the loop of a conserved hairpin near the 3'-end of 16S rRNA in the 30S particle. May play a critical role in biogenesis of 30S subunits. This chain is Ribosomal RNA small subunit methyltransferase A, found in Tolumonas auensis (strain DSM 9187 / NBRC 110442 / TA 4).